The sequence spans 896 residues: Serine/threonine-protein kinase TAO3 (896 aa).

The Protein kinase domain maps to Phe-24–Val-277. ATP-binding positions include Ile-30 to Val-38 and Lys-53. Asp-147 functions as the Proton acceptor in the catalytic mechanism. 2 disordered regions span residues Ser-316–Ser-366 and Asp-403–Gln-423. The segment covering Gly-334 to His-348 has biased composition (polar residues). Positions Ser-349 to Ser-366 are enriched in low complexity. A compositionally biased stretch (basic and acidic residues) spans Asp-403–Leu-414. 3 coiled-coil regions span residues Glu-450–Gln-513, Ser-545–Gln-650, and Leu-752–Phe-873. Residues Leu-565–Leu-587 are compositionally biased toward basic and acidic residues. The disordered stretch occupies residues Leu-565–Glu-593.

This sequence belongs to the protein kinase superfamily. STE Ser/Thr protein kinase family. STE20 subfamily.

The protein resides in the cytoplasm. It localises to the cell membrane. Its subcellular location is the membrane raft. The protein localises to the lipid droplet. It catalyses the reaction L-seryl-[protein] + ATP = O-phospho-L-seryl-[protein] + ADP + H(+). The enzyme catalyses L-threonyl-[protein] + ATP = O-phospho-L-threonyl-[protein] + ADP + H(+). Its function is as follows. Serine/threonine-protein kinase that acts as a regulator of the p38/MAPK14 stress-activated MAPK cascade and of the MAPK8/JNK cascade. In response to DNA damage, involved in the G2/M transition DNA damage checkpoint by activating the p38/MAPK14 stress-activated MAPK cascade, probably by mediating phosphorylation of upstream MAP kinase kinases. Inhibits basal activity of the MAPK8/JNK cascade. In Xenopus laevis (African clawed frog), this protein is Serine/threonine-protein kinase TAO3 (taok3).